We begin with the raw amino-acid sequence, 601 residues long: Glutathione-regulated potassium-efflux system protein KefB (601 aa).

13 consecutive transmembrane segments (helical) span residues 4 to 24 (ADLL…VPLA), 29 to 49 (IGAV…GLGF), 55 to 75 (EILH…GLEL), 87 to 107 (IFGV…GLLM), 111 to 131 (FLWQ…TAMA), 152 to 172 (VLLF…LLAG), 177 to 197 (HFDW…LIGG), 207 to 227 (FIAA…LVLS), 230 to 250 (LFMD…GVLL), 262 to 282 (AIDP…GMSL), 284 to 304 (LGVL…LVVI), 324 to 344 (MQFA…FSTA), and 356 to 376 (ALLL…MKGI). The region spanning 400-519 (KPQVIVVGFG…AGVTQFSRET (120 aa)) is the RCK N-terminal domain.

It belongs to the monovalent cation:proton antiporter 2 (CPA2) transporter (TC 2.A.37) family. KefB subfamily. In terms of assembly, interacts with the regulatory subunit KefG.

Its subcellular location is the cell inner membrane. Functionally, pore-forming subunit of a potassium efflux system that confers protection against electrophiles. Catalyzes K(+)/H(+) antiport. The polypeptide is Glutathione-regulated potassium-efflux system protein KefB (Salmonella newport (strain SL254)).